A 128-amino-acid polypeptide reads, in one-letter code: 3-aminoacrylate deaminase RutC (128 aa).

This sequence belongs to the RutC family.

It carries out the reaction (Z)-3-aminoacrylate + H2O + H(+) = 3-oxopropanoate + NH4(+). In terms of biological role, involved in pyrimidine catabolism. Catalyzes the deamination of 3-aminoacrylate to malonic semialdehyde, a reaction that can also occur spontaneously. RutC may facilitate the reaction and modulate the metabolic fitness, rather than catalyzing essential functions. The chain is 3-aminoacrylate deaminase RutC from Agrobacterium fabrum (strain C58 / ATCC 33970) (Agrobacterium tumefaciens (strain C58)).